A 349-amino-acid polypeptide reads, in one-letter code: MKFLDEAKVYIRSGDGGNGCVAFRREKYIEFGGPSGGNGGRGGDVVIEVADGLNTLIDYRYQQHFKAQKGTNGMGKDRHGANGKDIVLKVPRGTQIFDEDRETLLHDFTELGERFVLAEGGNGGFGNAHFKSSTNRAPRNANPGQEGEERWIWLRLKLIADAGLVGLPNAGKSTFLSKVSAAKPKIADYPFTTLHPQLGVVNVDGREFVLADIPGLIEGAHEGAGLGDRFLGHVERCRVLLHLIDATCEHAGKAYKTVRGELDAYAETLSDKVEIVALNKIDAVEPEELKKQRDRLKRAAKKTPLLMSGVTGQGVPEALRALVAVIGEAPVSDKAKAAADVEPWSPLTG.

The Obg domain maps to 1 to 159 (MKFLDEAKVY…RWIWLRLKLI (159 aa)). The OBG-type G domain maps to 160–327 (ADAGLVGLPN…ALRALVAVIG (168 aa)). Residues 166-173 (GLPNAGKS), 191-195 (FTTLH), 212-215 (DIPG), 279-282 (NKID), and 308-310 (SGV) each bind GTP. Residues S173 and T193 each coordinate Mg(2+).

It belongs to the TRAFAC class OBG-HflX-like GTPase superfamily. OBG GTPase family. Monomer. Mg(2+) is required as a cofactor.

The protein localises to the cytoplasm. An essential GTPase which binds GTP, GDP and possibly (p)ppGpp with moderate affinity, with high nucleotide exchange rates and a fairly low GTP hydrolysis rate. Plays a role in control of the cell cycle, stress response, ribosome biogenesis and in those bacteria that undergo differentiation, in morphogenesis control. This Rhodopseudomonas palustris (strain BisA53) protein is GTPase Obg.